A 457-amino-acid polypeptide reads, in one-letter code: GTPase Era, mitochondrial (457 aa).

The N-terminal 18 residues, 1–18 (MAFRVSISTFGKSLRVRR), are a transit peptide targeting the mitochondrion. The region spanning 107 to 350 (KVLRVAIIGA…RYLVVGAKPG (244 aa)) is the Era-type G domain. The segment at 115–122 (GAPNAGKS) is G1. 115–122 (GAPNAGKS) provides a ligand contact to GTP. Residues 141 to 145 (HTTRA) form a G2 region. The tract at residues 162–165 (DTPG) is G3. GTP-binding positions include 162–166 (DTPGL) and 231–234 (NKVD). Residues 231-234 (NKVD) form a G4 region. Positions 270 to 290 (AERRTDREARTSGSGDEEKPG) are enriched in basic and acidic residues. The disordered stretch occupies residues 270–300 (AERRTDREARTSGSGDEEKPGGDVADGEGSE). A G5 region spans residues 328 to 330 (VSA). The 82-residue stretch at 376-457 (LLEYLPKEVP…KLRLSVKVKN (82 aa)) folds into the KH type-2 domain.

This sequence belongs to the TRAFAC class TrmE-Era-EngA-EngB-Septin-like GTPase superfamily. Era GTPase family.

Its subcellular location is the mitochondrion matrix. It is found in the mitochondrion inner membrane. In terms of biological role, probable GTPase that plays a role in the mitochondrial ribosomal small subunit assembly. Specifically binds the 12S mitochondrial rRNA (12S mt-rRNA) to a 33 nucleotide section delineating the 3' terminal stem-loop region. May act as a chaperone that protects the 12S mt-rRNA on the 28S mitoribosomal subunit during ribosomal small subunit assembly. This Salmo salar (Atlantic salmon) protein is GTPase Era, mitochondrial (eral1).